A 106-amino-acid polypeptide reads, in one-letter code: ATP-dependent Clp protease adapter protein ClpS (106 aa).

The protein belongs to the ClpS family. Binds to the N-terminal domain of the chaperone ClpA.

Involved in the modulation of the specificity of the ClpAP-mediated ATP-dependent protein degradation. The protein is ATP-dependent Clp protease adapter protein ClpS of Vibrio parahaemolyticus serotype O3:K6 (strain RIMD 2210633).